Reading from the N-terminus, the 555-residue chain is Putative protein NRT1/ PTR FAMILY 2.14 (555 aa).

A run of 12 helical transmembrane segments spans residues 62–82, 93–113, 135–155, 181–201, 209–229, 234–254, 319–339, 363–383, 405–425, 441–461, 480–500, and 523–543; these read VTLINTWSALTNFAPIIGAFI, IVFGSIAELLGMLVLTFTSLV, YSQLYVLLSGLFLLSVGTGGI, FFSWYYTTHTIVQLVSMTLVL, WGIGFAIPTVLNFFALLLLFV, YVFVKPEGSVFSGVFKVLVAA, IKSIISIIPIFASSIIGFLAM, LIPPASITVISLLNIGIWLPF, LQKVGIGNIFSISTMLISGIV, VFWLTPQQVLMGFYQVFTIVG, SLLYLGLSLASYLSSAMVSIV, and CFYYFIAALSTLNFIFFFWCA.

Belongs to the major facilitator superfamily. Proton-dependent oligopeptide transporter (POT/PTR) (TC 2.A.17) family. In terms of tissue distribution, not detected.

Its subcellular location is the membrane. The protein is Putative protein NRT1/ PTR FAMILY 2.14 (NPF2.14) of Arabidopsis thaliana (Mouse-ear cress).